We begin with the raw amino-acid sequence, 305 residues long: Serine/threonine-protein kinase 16 (305 aa).

Residue glycine 2 is the site of N-myristoyl glycine attachment. S-palmitoyl cysteine attachment occurs at residues cysteine 6 and cysteine 8. Residues 20–293 (YLFIQKLGEG…PLLLSQLEAL (274 aa)) enclose the Protein kinase domain. ATP is bound by residues 26–34 (LGEGGFSYV) and lysine 49. Residue aspartate 148 is the Proton acceptor of the active site. Residues 166-202 (DLGSMNQACIHVEGSRQALTLQDWAAQRCTISYRAPE) are activation loop. Phosphothreonine; by autocatalysis is present on threonine 185. A Phosphoserine; by autocatalysis modification is found at serine 197. Tyrosine 198 is subject to Phosphotyrosine; by autocatalysis.

It belongs to the protein kinase superfamily. Ser/Thr protein kinase family. As to quaternary structure, monomer. Interacts with DRG1 (via its N-terminal); the interaction phosphorylates DRG1. Post-translationally, mainly autophosphorylated on serine/threonine residues. Also autophosphorylated on Tyr-198. It is uncertain whether palmitoylation is on Cys-6 and/or Cys-8. As to expression, ubiquitously expressed at very low levels.

It is found in the cytoplasm. Its subcellular location is the perinuclear region. The protein localises to the membrane. The catalysed reaction is L-seryl-[protein] + ATP = O-phospho-L-seryl-[protein] + ADP + H(+). The enzyme catalyses L-threonyl-[protein] + ATP = O-phospho-L-threonyl-[protein] + ADP + H(+). It catalyses the reaction L-tyrosyl-[protein] + ATP = O-phospho-L-tyrosyl-[protein] + ADP + H(+). In terms of biological role, membrane-associated protein kinase that phosphorylates on serine and threonine residues. In vitro substrates include DRG1, ENO1 and EIF4EBP1. Also autophosphorylates. May be involved in secretory vesicle trafficking or intracellular signaling. May have a role in regulating stromal-epithelial interactions that occur during ductal morphogenesis in the mammary gland. May be involved in TGF-beta signaling. Able to autophosphorylate on Tyr residue; it is however unclear whether it has tyrosine-protein kinase toward other proteins. The sequence is that of Serine/threonine-protein kinase 16 (STK16) from Homo sapiens (Human).